A 538-amino-acid polypeptide reads, in one-letter code: Importin subunit alpha-6 (538 aa).

In terms of domain architecture, IBB spans 1–58 (MSYKPSAKTEVRRNRYKVSVDADEGRRRREDNMVEIRKNKREENLQKKRREGFNPSMA). A disordered region spans residues 1 to 69 (MSYKPSAKTE…QPGQDFSSSL (69 aa)). Over residues 7 to 46 (AKTEVRRNRYKVSVDADEGRRRREDNMVEIRKNKREENLQ) the composition is skewed to basic and acidic residues. A compositionally biased stretch (polar residues) spans 56–69 (SMASQPGQDFSSSL). ARM repeat units follow at residues 109–149 (NPPI…NIAS), 152–191 (SENT…NVAG), 194–234 (PKCR…NFCR), 236–275 (KPQP…YLSD), 278–317 (NEKI…NIVT), 320–360 (DIQT…NITA), 363–402 (TSQI…NATS), and 406–445 (HDQI…NILK).

Belongs to the importin alpha family. As to quaternary structure, forms a complex with importin subunit beta-1.

It is found in the nucleus envelope. Its function is as follows. Binds to conventional NLS motifs and mediates nuclear protein import across the nuclear envelope. Acts as a cellular receptor for the nuclear import of the virD2 protein of Agrobacterium, but is not essential for Agrobacterium-mediated root transformation. The polypeptide is Importin subunit alpha-6 (Arabidopsis thaliana (Mouse-ear cress)).